We begin with the raw amino-acid sequence, 334 residues long: MKKQIITATTAVVLGSTLFAGAASAQSIKVKKGDTLWDLSRKYDTTISKIKSENHLRSDIIYVGQTLSINGKSTSSKSSSSSSSSSTYKVKSGDSLWKISKKYGMTINELKKLNGLKSDLLRVGQVLKLKGSTSSSSSSSSKVSSSSTSTYKVKSGDSLSKIASKYGTTVSKLKSLNGLKSDVIYVNQVLKVKGTSTSSSKPASSSSSSSSKTSSTSLNVSKLVSDAKALVGTPYKWGGTTTSGFDCSGFIWYVLNKQTSVGRTSTAGYWSSMKSIASPSVGDFVFFTTYKSGPSHMGIYIGNNSFIHAGSDGVQISSLNNSYWKPRYLGAKRF.

Positions 1–25 are cleaved as a signal peptide; that stretch reads MKKQIITATTAVVLGSTLFAGAASA. 3 LysM domains span residues 26–69, 86–129, and 149–192; these read QSIK…TLSI, STYK…VLKL, and STYK…VLKV. Disordered regions lie at residues 70-89, 131-153, and 195-215; these read NGKS…STYK, GSTS…TYKV, and TSTS…KTSS. 2 stretches are compositionally biased toward low complexity: residues 72-87 and 132-153; these read KSTS…SSST and STSS…TYKV. One can recognise a NlpC/P60 domain in the interval 217–334; the sequence is SLNVSKLVSD…KPRYLGAKRF (118 aa). The active-site Nucleophile is the Cys247. The Proton acceptor role is filled by His296. The active site involves His308.

It belongs to the peptidase C40 family.

The protein resides in the secreted. It localises to the cell wall. Its function is as follows. Cell wall hydrolase that cleaves gamma-D-glutamate-meso-diaminopimelate bonds in peptidoglycan. Seems to play a role in cell separation during vegetative growth. The sequence is that of Probable peptidoglycan endopeptidase LytE (lytE) from Bacillus subtilis (strain 168).